We begin with the raw amino-acid sequence, 344 residues long: Signal peptide peptidase (344 aa).

Residues 1–11 (MKNCERFANLA) are Lumenal-facing. A helical membrane pass occupies residues 12–32 (LAGLTLAPLVVRVNPNLNVIL). At 33–62 (TACITVYVGCFRSVKDTPPTETMSKEHAMR) the chain is on the cytoplasmic side. Residues 63–83 (FPLVGSAMLLSLFLLFKFLSK) traverse the membrane as a helical segment. Residues 84-89 (DLVNAV) lie on the Lumenal side of the membrane. Residues 90–110 (LTAYFFVLGIVALSATLLPAI) traverse the membrane as a helical segment. Topologically, residues 111–136 (RRFLPNPWNDNLIVWRFPYFKSLEVE) are cytoplasmic. The chain crosses the membrane as a helical span at residues 137–157 (FTKSQVVAGIPGTFFCAWYAW). Residues 158–160 (KKH) are Lumenal-facing. A helical membrane pass occupies residues 161–181 (WLANNILGLSFCIQGIEMLSL). At 182–188 (GSFKTGA) the chain is on the cytoplasmic side. A helical transmembrane segment spans residues 189 to 209 (ILLAGLFFYDIFWVFFTPVMV). Asp-198 is an active-site residue. Over 210 to 230 (SVAKSFDAPIKLLFPTGDALR) the chain is Lumenal. The helical transmembrane segment at 231–251 (PYSMLGLGDIVIPGIFVALAL) threads the bilayer. Asp-239 is an active-site residue. Residues 252–263 (RFDVSRRRQPQY) lie on the Cytoplasmic side of the membrane. Residues 264-284 (FTSAFIGYAVGVILTIVVMNW) form a helical membrane-spanning segment. The Lumenal segment spans residues 285 to 290 (FQAAQP). The PAL motif lies at 290–292 (PAL). The chain crosses the membrane as a helical span at residues 291 to 311 (ALLYIVPAVIGFLASHCIWNG). The Cytoplasmic portion of the chain corresponds to 312–344 (DIKPLLAFDESKTEEATTDESKTSEEVNKAHDE). Residues 323 to 344 (KTEEATTDESKTSEEVNKAHDE) form a disordered region.

This sequence belongs to the peptidase A22B family. Ubiquitous with the highest expression in emerging leaves, roots, and floral tissues (at the protein level). Highly detected in pollen.

It localises to the endoplasmic reticulum membrane. Intramembrane-cleaving aspartic protease (I-CLiP) that cleaves type II membrane signal peptides in the hydrophobic plane of the membrane. Catalyzes intramembrane proteolysis of some signal peptides after they have been cleaved from a preprotein, resulting in the release of the fragment from the ER membrane into the cytoplasm. Plays a critical role in the development and function of the reproductive tissues, especially in pollen development. This Arabidopsis thaliana (Mouse-ear cress) protein is Signal peptide peptidase (SPP).